The primary structure comprises 598 residues: Nuclear receptor subfamily 4 group A member 1 (598 aa).

Disordered regions lie at residues 1–43 (MPCI…PEAA) and 128–151 (GSDYYGSPCSAPSPSTPSFQPPQL). The span at 134–145 (SPCSAPSPSTPS) shows a compositional bias: low complexity. Positions 171 to 466 (RAWTEQLPKA…PAEGKLIFCS (296 aa)) are required for nuclear import. A DNA-binding region (nuclear receptor) is located at residues 264–339 (EGRCAVCGDN…VGMVKEVVRT (76 aa)). 2 NR C4-type zinc fingers span residues 267 to 287 (CAVCGDNASCQHYGVRTCEGC) and 303 to 327 (CLANKDCPVDKRRRNRCQFCRFQKC). The tract at residues 268-354 (AVCGDNASCQ…RRGRLPSKPK (87 aa)) is required for binding NBRE-containing DNA. The tract at residues 299 to 361 (AKYICLANKD…KPKQPPETSP (63 aa)) is required for the interaction with RXRA. S341 carries the post-translational modification Phosphoserine; by PKA. Positions 341 to 361 (SLKGRRGRLPSKPKQPPETSP) are disordered. The residue at position 351 (S351) is a Phosphoserine; by PKA, RPS6KA1 and RPS6KA3. The region spanning 360 to 595 (SPAHLLTSLV…PIVDKIFMDT (236 aa)) is the NR LBD domain. A binds lipopolysaccharide region spans residues 521–544 (PRRVEELQNRIASCLKEHVSAEAG). The tract at residues 584–595 (PPPIVDKIFMDT) is AF-2.

The protein belongs to the nuclear hormone receptor family. NR4 subfamily. As to quaternary structure, binds the NGFI-B response element (NBRE) as a monomer. Binds the Nur response element (NurRE), consisting of two inverse NBRE-related octanucleotide repeats separated by 6 base-pairs, as a dimer. Interacts (via N-terminus) with NLRP3 (via LRR repeat domain); the interaction is direct, requires binding of NR4A1/Nur77 to NBRE-containing dsDNA and lipopolysaccharide, and leads to non-canonical NLRP3 inflammasome activation. Interacts with GADD45GIP1. Interacts with STK11. Interacts with IFI27. Heterodimer (via DNA-binding domain) with RXRA (via C-terminus); DNA-binding of the heterodimer is enhanced by 9-cis retinoic acid. Competes for the RXRA interaction with EP300 and thereby attenuates EP300 mediated acetylation of RXRA. Interacts with NCOA1. Interacts with NCOA2. Interacts with NCOA3. Zn(2+) is required as a cofactor. Phosphorylated at Ser-351 by RPS6KA1 and RPS6KA3 in response to mitogenic or stress stimuli. Post-translationally, acetylated by p300/CBP, acetylation increases stability. Deacetylated by HDAC1.

It localises to the nucleus. The protein resides in the cytoplasm. The protein localises to the cytosol. Its subcellular location is the mitochondrion. Its function is as follows. Orphan nuclear receptor. Binds the NGFI-B response element (NBRE) 5'-AAAGGTCA-3'. Binds 9-cis-retinoic acid outside of its ligand-binding (NR LBD) domain. Participates in energy homeostasis by sequestrating the kinase STK11 in the nucleus, thereby attenuating cytoplasmic AMPK activation. Regulates the inflammatory response in macrophages by regulating metabolic adaptations during inflammation, including repressing the transcription of genes involved in the citric acid cycle (TCA). Inhibits NF-kappa-B signaling by binding to low-affinity NF-kappa-B binding sites, such as at the IL2 promoter. May act concomitantly with NR4A2 in regulating the expression of delayed-early genes during liver regeneration. Plays a role in the vascular response to injury. In the cytosol, upon its detection of both bacterial lipopolysaccharide (LPS) and NBRE-containing mitochondrial DNA released by GSDMD pores during pyroptosis, it promotes non-canonical NLRP3 inflammasome activation by stimulating association of NLRP3 and NEK7. This Bos taurus (Bovine) protein is Nuclear receptor subfamily 4 group A member 1 (NR4A1).